Reading from the N-terminus, the 294-residue chain is 33 kDa chaperonin (294 aa).

Disulfide bonds link Cys-238-Cys-240 and Cys-271-Cys-274.

The protein belongs to the HSP33 family. Under oxidizing conditions two disulfide bonds are formed involving the reactive cysteines. Under reducing conditions zinc is bound to the reactive cysteines and the protein is inactive.

The protein resides in the cytoplasm. Its function is as follows. Redox regulated molecular chaperone. Protects both thermally unfolding and oxidatively damaged proteins from irreversible aggregation. Plays an important role in the bacterial defense system toward oxidative stress. This is 33 kDa chaperonin from Staphylococcus haemolyticus (strain JCSC1435).